A 261-amino-acid chain; its full sequence is Non-structural protein 2a (261 aa).

Belongs to the coronaviruses ns2a protein family.

Its subcellular location is the host cytoplasm. Functionally, not essential for virus replication in transformed murine cells. This chain is Non-structural protein 2a, found in Mus musculus (Mouse).